A 92-amino-acid chain; its full sequence is Small ribosomal subunit protein uS19 (92 aa).

It belongs to the universal ribosomal protein uS19 family.

In terms of biological role, protein S19 forms a complex with S13 that binds strongly to the 16S ribosomal RNA. This is Small ribosomal subunit protein uS19 from Shewanella putrefaciens (strain CN-32 / ATCC BAA-453).